A 234-amino-acid polypeptide reads, in one-letter code: Triosephosphate isomerase (234 aa).

Residue 8-10 (NFK) participates in substrate binding. H90 serves as the catalytic Electrophile. E159 acts as the Proton acceptor in catalysis. Substrate is bound by residues G165 and S197.

It belongs to the triosephosphate isomerase family. In terms of assembly, homodimer.

It localises to the cytoplasm. It catalyses the reaction D-glyceraldehyde 3-phosphate = dihydroxyacetone phosphate. It participates in carbohydrate biosynthesis; gluconeogenesis. It functions in the pathway carbohydrate degradation; glycolysis; D-glyceraldehyde 3-phosphate from glycerone phosphate: step 1/1. In terms of biological role, involved in the gluconeogenesis. Catalyzes stereospecifically the conversion of dihydroxyacetone phosphate (DHAP) to D-glyceraldehyde-3-phosphate (G3P). The sequence is that of Triosephosphate isomerase from Helicobacter pylori (strain J99 / ATCC 700824) (Campylobacter pylori J99).